An 84-amino-acid chain; its full sequence is Beta-defensin 119 (84 aa).

The N-terminal stretch at 1–21 (MKLLYLFLAILLAIEEPVISG) is a signal peptide. Cystine bridges form between cysteine 35-cysteine 49 and cysteine 39-cysteine 56.

It belongs to the beta-defensin family.

The protein resides in the secreted. Its function is as follows. Has antibacterial activity. This is Beta-defensin 119 (DEFB119) from Pan troglodytes (Chimpanzee).